The sequence spans 349 residues: Nicotinate-nucleotide--dimethylbenzimidazole phosphoribosyltransferase (349 aa).

Catalysis depends on glutamate 318, which acts as the Proton acceptor.

This sequence belongs to the CobT family.

It carries out the reaction 5,6-dimethylbenzimidazole + nicotinate beta-D-ribonucleotide = alpha-ribazole 5'-phosphate + nicotinate + H(+). The protein operates within nucleoside biosynthesis; alpha-ribazole biosynthesis; alpha-ribazole from 5,6-dimethylbenzimidazole: step 1/2. Functionally, catalyzes the synthesis of alpha-ribazole-5'-phosphate from nicotinate mononucleotide (NAMN) and 5,6-dimethylbenzimidazole (DMB). The sequence is that of Nicotinate-nucleotide--dimethylbenzimidazole phosphoribosyltransferase from Geobacter sp. (strain M21).